A 313-amino-acid chain; its full sequence is tRNA dimethylallyltransferase (313 aa).

11–18 (GPTAAGKS) is a binding site for ATP. A substrate-binding site is contributed by 13-18 (TAAGKS). Interaction with substrate tRNA stretches follow at residues 36–39 (DSAT), 160–164 (QRIQR), and 244–249 (RCVGYR).

It belongs to the IPP transferase family. Monomer. Mg(2+) is required as a cofactor.

The enzyme catalyses adenosine(37) in tRNA + dimethylallyl diphosphate = N(6)-dimethylallyladenosine(37) in tRNA + diphosphate. Functionally, catalyzes the transfer of a dimethylallyl group onto the adenine at position 37 in tRNAs that read codons beginning with uridine, leading to the formation of N6-(dimethylallyl)adenosine (i(6)A). The sequence is that of tRNA dimethylallyltransferase from Bordetella parapertussis (strain 12822 / ATCC BAA-587 / NCTC 13253).